The primary structure comprises 782 residues: Endonuclease MutS2 (782 aa).

336–343 (GPNTGGKT) is a binding site for ATP. The Smr domain maps to 707–782 (LDLRGYRYED…GFGVTVATLK (76 aa)).

Belongs to the DNA mismatch repair MutS family. MutS2 subfamily. As to quaternary structure, homodimer. Binds to stalled ribosomes, contacting rRNA.

In terms of biological role, endonuclease that is involved in the suppression of homologous recombination and thus may have a key role in the control of bacterial genetic diversity. Acts as a ribosome collision sensor, splitting the ribosome into its 2 subunits. Detects stalled/collided 70S ribosomes which it binds and splits by an ATP-hydrolysis driven conformational change. Acts upstream of the ribosome quality control system (RQC), a ribosome-associated complex that mediates the extraction of incompletely synthesized nascent chains from stalled ribosomes and their subsequent degradation. Probably generates substrates for RQC. The sequence is that of Endonuclease MutS2 from Staphylococcus aureus (strain MRSA252).